A 658-amino-acid chain; its full sequence is Katanin p80 WD40 repeat-containing subunit B1 (658 aa).

The interval 1–284 is interaction with dynein; sequence MATPVVTKTA…VADLAICNDQ (284 aa). An interaction with centrosomes region spans residues 1-300; sequence MATPVVTKTA…SQSNVSSYVV (300 aa). 6 WD repeats span residues 18-58, 61-100, 103-142, 145-184, 187-226, and 229-269; these read AHAS…CIMS, GHTS…ILRT, GHKA…CVFR, GHSQ…MMSE, GHTG…VVSC, and GEPG…DVVL. An interaction with PAFAH1B1 region spans residues 285-437; it reads LIGVAFSQSN…LPQLPVPNLE (153 aa). Residues 311 to 329 show a composition bias toward polar residues; it reads VTQDPVQANQPLTQQTPNP. Disordered stretches follow at residues 311–419 and 434–458; these read VTQD…EVSK and PNLE…PDII. Residues 352–374 are compositionally biased toward basic and acidic residues; sequence HNSESERRSPSSEDDRDERESRA. Thr395 carries the phosphothreonine modification. An interaction with KATNA1 and NDEL1 region spans residues 436–658; sequence LEVPARPSVM…ELHLLMASLD (223 aa).

It belongs to the WD repeat KATNB1 family. As to quaternary structure, interacts with KATNA1. This interaction enhances the microtubule binding and severing activity of KATNA1 and also targets this activity to the centrosome. This interaction is weakly competed by KATNBL1 which has a lower affinity for it. Interacts with ASPM; the katanin complex formation KATNA1:KATNB1 is required for the association of ASPM. Interacts with dynein, microtubules, NDEL1 and PAFAH1B1. Interacts with KATNAL1; this interaction is weakly competed by KATNBL1 which has a lower affinity for it. Interacts with CAMSAP2 and CAMSAP3; leading to regulate the length of CAMSAP-decorated microtubule stretches.

It localises to the cytoplasm. The protein localises to the cytoskeleton. It is found in the microtubule organizing center. Its subcellular location is the centrosome. The protein resides in the spindle pole. It localises to the spindle. Functionally, participates in a complex which severs microtubules in an ATP-dependent manner. May act to target the enzymatic subunit of this complex to sites of action such as the centrosome. Microtubule severing may promote rapid reorganization of cellular microtubule arrays and the release of microtubules from the centrosome following nucleation. Microtubule release from the mitotic spindle poles may allow depolymerization of the microtubule end proximal to the spindle pole, leading to poleward microtubule flux and poleward motion of chromosome. The function in regulating microtubule dynamics at spindle poles seems to depend on the association of the katanin KATNA1:KATNB1 complex with ASPM which recruits it to microtubules. Reversely KATNA1:KATNB1 can enhance ASPM blocking activity on microtubule minus-end growth. Microtubule release within the cell body of neurons may be required for their transport into neuronal processes by microtubule-dependent motor proteins. This transport is required for axonal growth. The polypeptide is Katanin p80 WD40 repeat-containing subunit B1 (Katnb1) (Mus musculus (Mouse)).